We begin with the raw amino-acid sequence, 316 residues long: Beta-lactamase 3 (316 aa).

An N-terminal signal peptide occupies residues 1 to 29 (MFVLNKFFTNSHYKKIVPVVLLSCATLIG). Cysteine 30 is lipidated: N-palmitoyl cysteine. Cysteine 30 is lipidated: S-diacylglycerol cysteine. Residues 34–53 (NTQSESNKQTNQTNQVKQEN) are disordered. Residues 40–50 (NKQTNQTNQVK) are compositionally biased toward low complexity. The active-site Acyl-ester intermediate is serine 95. The Proton acceptor role is filled by glutamate 191. 257 to 259 (KTG) is a substrate binding site.

Belongs to the class-A beta-lactamase family.

The protein localises to the cell membrane. It catalyses the reaction a beta-lactam + H2O = a substituted beta-amino acid. In Bacillus cereus, this protein is Beta-lactamase 3 (blaZ).